The sequence spans 450 residues: Gluconate permease (450 aa).

12 consecutive transmembrane segments (helical) span residues 6 to 26 (HDAY…VLIT), 30 to 50 (VHPF…SGMP), 60 to 80 (DGFG…TMLG), 116 to 136 (VGIP…VFIV), 142 to 162 (VSLI…HGLV), 183 to 203 (ILYG…LFGA), 233 to 253 (FGVT…KTFA), 269 to 289 (MIGH…YTFG), 312 to 332 (AIVM…ASGV), 338 to 358 (HLAV…AAVI), 366 to 386 (TVAT…IPGV), and 430 to 450 (AMET…SLVL).

This sequence belongs to the GntP permease family.

The protein localises to the cell inner membrane. The protein operates within carbohydrate acid metabolism; D-gluconate degradation. The chain is Gluconate permease (gnuT) from Pseudomonas aeruginosa (strain ATCC 15692 / DSM 22644 / CIP 104116 / JCM 14847 / LMG 12228 / 1C / PRS 101 / PAO1).